The primary structure comprises 1014 residues: Collagen alpha-1(I) chain (1014 aa).

The tract at residues 1-1014 (SYGYDEKGGI…PGPPGPPGPP (1014 aa)) is disordered. The span at 9–22 (GISVPGPMGPSGPR) shows a compositional bias: low complexity. A 4-hydroxyproline mark is found at P25, P28, P30, P39, P42, P45, P60, P75, P81, P90, and P96. Residues 33–51 (QGFQGPPGEPGEPGSSGPM) show a composition bias toward low complexity. Over residues 63 to 77 (NGDDGEAGKPGRPGE) the composition is skewed to basic and acidic residues. K99 is modified (5-hydroxylysine; alternate). K99 carries an O-linked (Gal...) hydroxylysine; alternate glycan. The residue at position 105 (S105) is a Phosphoserine. The segment covering 113–129 (DAGPAGPKGEPGSPGEN) has biased composition (low complexity). 4-hydroxyproline is present on residues P123, P126, P132, P141, P147, P168, P177, P180, P207, P210, P222, P228, P237, P243, P246, and P261. Low complexity predominate over residues 147-165 (PGASGPAGARGNDGATGAA). The segment covering 167–179 (PPGPTGPAGPPGF) has biased composition (pro residues). Positions 213–252 (AGAAGPAGNPGADGQPGAKGANGAPGIAGAPGFPGARGPS) are enriched in low complexity. Residue K264 is modified to 5-hydroxylysine. P270, P273, P285, P294, P309, P315, P324, and P330 each carry 4-hydroxyproline. Residues 319 to 328 (GERGGPGSRG) show a composition bias toward gly residues. K339 is subject to 5-hydroxylysine. P348, P357, P363, P369, P378, P381, P390, P399, P405, P417, P426, P435, P438, P456, P473, P479, P485, P491, P497, P503, P515, P524, P535, P548, P554, and P563 each carry 4-hydroxyproline. A compositionally biased stretch (low complexity) spans 372–398 (KGLTGSPGSPGPDGKTGPPGPAGQDGR). The segment covering 407–426 (ARGQAGVMGFPGPKGAAGEP) has biased composition (low complexity). Residues 485 to 494 (PGEAGKPGEQ) are compositionally biased toward low complexity. K575 carries the 5-hydroxylysine modification. A 4-hydroxyproline mark is found at P581, P596, and P602. Positions 608 to 622 (SGPSGPAGPTGARGA) are enriched in low complexity. Position 611 is a phosphoserine (S611). 7 positions are modified to 4-hydroxyproline: P623, P629, P632, P641, P647, P674, and P683. A compositionally biased stretch (low complexity) spans 635 to 665 (AGFAGPPGADGQPGAKGEPGDAGAKGDAGPS). K686 bears the 5-hydroxylysine mark. Low complexity predominate over residues 691–707 (SAGPPGATGFPGAAGRV). 4-hydroxyproline is present on residues P695 and P701. P709 bears the 3-hydroxyproline mark. P710, P719, P722, P743, P752, P760, P769, P787, P796, P799, P805, P820, P826, P832, P841, and P847 each carry 4-hydroxyproline. Positions 736-745 (ETGPAGRPGE) are enriched in low complexity. Residues 757–769 (KGSPGADGPAGAP) show a composition bias toward low complexity. Residues 819–829 (PPGPVGPPGLA) show a composition bias toward pro residues. 5-hydroxylysine is present on K856. A compositionally biased stretch (pro residues) spans 864 to 879 (PGPPGAPGAPGAPGPV). A 4-hydroxyproline mark is found at P867, P870, and P873. A compositionally biased stretch (low complexity) spans 900-914 (AGPAGARGPAGPQGP). The segment covering 915-929 (RGDKGETGEQGDRGI) has biased composition (basic and acidic residues). K918 carries the post-translational modification 5-hydroxylysine. 5-hydroxylysine; alternate is present on K930. K930 is a glycosylation site (O-linked (Gal...) hydroxylysine; alternate). A 4-hydroxyproline mark is found at P945, P948, P966, and P981. Positions 948 to 981 (PGEQGPSGASGPAGPRGPPGSAGSPGKDGLNGLP) are enriched in low complexity. At P986 the chain carries 3-hydroxyproline. P987 bears the 4-hydroxyproline mark. The segment covering 999–1014 (VGPPGPPGPPGPPGPP) has biased composition (pro residues). P1001 is subject to 3-hydroxyproline. Position 1002 is a 4-hydroxyproline (P1002). P1004 bears the 3-hydroxyproline mark. Position 1005 is a 4-hydroxyproline (P1005). P1007 carries the 3-hydroxyproline modification. P1008, P1011, and P1014 each carry 4-hydroxyproline.

This sequence belongs to the fibrillar collagen family. Trimers of one alpha 2(I) and two alpha 1(I) chains. Post-translationally, contains mostly 4-hydroxyproline. Proline residues at the third position of the tripeptide repeating unit (G-X-Y) are hydroxylated in some or all of the chains. In terms of processing, contains 3-hydroxyproline at a few sites. This modification occurs on the first proline residue in the sequence motif Gly-Pro-Hyp, where Hyp is 4-hydroxyproline. Lysine residues at the third position of the tripeptide repeating unit (G-X-Y) are 5-hydroxylated in some or all of the chains. Post-translationally, O-glycosylated on hydroxylated lysine residues. The O-linked glycan consists of a Glc-Gal disaccharide. Expressed in bones.

It is found in the secreted. Its subcellular location is the extracellular space. It localises to the extracellular matrix. Functionally, type I collagen is a member of group I collagen (fibrillar forming collagen). The sequence is that of Collagen alpha-1(I) chain from Megatherium americanum (Giant ground sloth).